Reading from the N-terminus, the 397-residue chain is Diphosphomevalonate decarboxylase (397 aa).

Residues Tyr-19–Lys-22, Arg-74, Ser-153–Arg-158, and Thr-209 contribute to the (R)-5-diphosphomevalonate site. A disordered region spans residues Gly-378 to Arg-397.

The protein belongs to the diphosphomevalonate decarboxylase family. In terms of assembly, homodimer.

It carries out the reaction (R)-5-diphosphomevalonate + ATP = isopentenyl diphosphate + ADP + phosphate + CO2. The protein operates within isoprenoid biosynthesis; isopentenyl diphosphate biosynthesis via mevalonate pathway; isopentenyl diphosphate from (R)-mevalonate: step 3/3. In terms of biological role, diphosphomevalonate decarboxylase; part of the second module of ergosterol biosynthesis pathway that includes the middle steps of the pathway. The second module is carried out in the vacuole and involves the formation of farnesyl diphosphate, which is also an important intermediate in the biosynthesis of ubiquinone, dolichol, heme and prenylated proteins. Activity by the mevalonate kinase ERG12 first converts mevalonate into 5-phosphomevalonate. 5-phosphomevalonate is then further converted to 5-diphosphomevalonate by the phosphomevalonate kinase ERG8. The diphosphomevalonate decarboxylase MVD1/ERG19 then produces isopentenyl diphosphate. The isopentenyl-diphosphate delta-isomerase IDI1 then catalyzes the 1,3-allylic rearrangement of the homoallylic substrate isopentenyl (IPP) to its highly electrophilic allylic isomer, dimethylallyl diphosphate (DMAPP). Finally the farnesyl diphosphate synthase ERG20 catalyzes the sequential condensation of isopentenyl pyrophosphate with dimethylallyl pyrophosphate, and then with the resultant geranylpyrophosphate to the ultimate product farnesyl pyrophosphate. The polypeptide is Diphosphomevalonate decarboxylase (Eremothecium gossypii (strain ATCC 10895 / CBS 109.51 / FGSC 9923 / NRRL Y-1056) (Yeast)).